Here is a 233-residue protein sequence, read N- to C-terminus: Protein Thf1 (233 aa).

A coiled-coil region spans residues Asp183–Ala204. The segment at Ala212–Glu233 is disordered.

This sequence belongs to the THF1 family.

In terms of biological role, may be involved in photosynthetic membrane biogenesis. The protein is Protein Thf1 of Nostoc sp. (strain PCC 7120 / SAG 25.82 / UTEX 2576).